Here is a 332-residue protein sequence, read N- to C-terminus: Phosphate acyltransferase (332 aa).

This sequence belongs to the PlsX family. Homodimer. Probably interacts with PlsY.

The protein localises to the cytoplasm. The catalysed reaction is a fatty acyl-[ACP] + phosphate = an acyl phosphate + holo-[ACP]. The protein operates within lipid metabolism; phospholipid metabolism. Catalyzes the reversible formation of acyl-phosphate (acyl-PO(4)) from acyl-[acyl-carrier-protein] (acyl-ACP). This enzyme utilizes acyl-ACP as fatty acyl donor, but not acyl-CoA. The sequence is that of Phosphate acyltransferase from Sulfurimonas denitrificans (strain ATCC 33889 / DSM 1251) (Thiomicrospira denitrificans (strain ATCC 33889 / DSM 1251)).